A 417-amino-acid chain; its full sequence is Cobalamin binding intrinsic factor (417 aa).

Positions 1-18 (MAWLSFYLLNVLWAVAGT) are cleaved as a signal peptide. 3 disulfide bridges follow: C26–C246, C103–C288, and C143–C182. Residue D171 participates in cob(II)alamin binding. S191 is subject to Phosphoserine. N209 carries N-linked (GlcNAc...) asparagine glycosylation. Positions 222 and 270 each coordinate cob(II)alamin. N-linked (GlcNAc...) asparagine glycans are attached at residues N311 and N330. Cob(II)alamin contacts are provided by residues 365–370 (SWGLIV) and 386–395 (WEFLSGKTPL). The N-linked (GlcNAc...) asparagine glycan is linked to N413.

The protein belongs to the eukaryotic cobalamin transport proteins family. Interacts with CUBN (via CUB domains). Post-translationally, the N-terminus is blocked. Gastric mucosa.

The protein resides in the secreted. Promotes absorption of the essential vitamin cobalamin (Cbl) in the ileum. After interaction with CUBN, the CBLIF-cobalamin complex is internalized via receptor-mediated endocytosis. This is Cobalamin binding intrinsic factor from Rattus norvegicus (Rat).